Consider the following 312-residue polypeptide: tRNA pseudouridine synthase B (312 aa).

The active-site Nucleophile is the Asp48.

This sequence belongs to the pseudouridine synthase TruB family. Type 1 subfamily.

The enzyme catalyses uridine(55) in tRNA = pseudouridine(55) in tRNA. Functionally, responsible for synthesis of pseudouridine from uracil-55 in the psi GC loop of transfer RNAs. This Haemophilus influenzae (strain ATCC 51907 / DSM 11121 / KW20 / Rd) protein is tRNA pseudouridine synthase B.